Consider the following 181-residue polypeptide: Probable inosine/xanthosine triphosphatase (181 aa).

D65 is a binding site for Mg(2+).

Belongs to the YjjX NTPase family. In terms of assembly, homodimer. Mg(2+) serves as cofactor. It depends on Mn(2+) as a cofactor.

It catalyses the reaction XTP + H2O = XDP + phosphate + H(+). It carries out the reaction ITP + H2O = IDP + phosphate + H(+). In terms of biological role, phosphatase that hydrolyzes non-canonical purine nucleotides such as XTP and ITP to their respective diphosphate derivatives. Probably excludes non-canonical purines from DNA/RNA precursor pool, thus preventing their incorporation into DNA/RNA and avoiding chromosomal lesions. This Caldivirga maquilingensis (strain ATCC 700844 / DSM 13496 / JCM 10307 / IC-167) protein is Probable inosine/xanthosine triphosphatase.